We begin with the raw amino-acid sequence, 325 residues long: uncharacterized protein (325 aa).

Polar residues-rich tracts occupy residues 1–21 and 29–57; these read MSYQQRANDSMNSAKQYSSSA and EPFSSSGAPQNRNFDTSYTSEIPSNSSRA. The disordered stretch occupies residues 1–325; the sequence is MSYQQRANDS…LKTGHHSERY (325 aa). Residues 86–109 are compositionally biased toward basic and acidic residues; the sequence is ESRKKEQSDVRGGDTSYSRRHDDS. Composition is skewed to polar residues over residues 114 to 167 and 174 to 193; these read NKYS…TTQG and YSQSYPTDTYGSRQKATPSD. Low complexity-rich tracts occupy residues 200–210 and 252–278; these read YDYSSSGSHTH and ATDTTAEANRRAATGTRNARTTAQRNA. Over residues 282–325 the composition is skewed to basic and acidic residues; that stretch reads EDEHVSMGDKMKGNMEKMAGKLTRDPELVQKGEDLKTGHHSERY.

This is an uncharacterized protein from Schizosaccharomyces pombe (strain 972 / ATCC 24843) (Fission yeast).